The chain runs to 45 residues: MEAVFLLAKLPEAYQIFDPLVDVLPVIPVFFLALAFVWQAAVGFK.

A propeptide spanning residues 1–8 (MEAVFLLA) is cleaved from the precursor. A helical transmembrane segment spans residues 24–44 (LPVIPVFFLALAFVWQAAVGF).

Belongs to the PsbK family. In terms of assembly, PSII is composed of 1 copy each of membrane proteins PsbA, PsbB, PsbC, PsbD, PsbE, PsbF, PsbH, PsbI, PsbJ, PsbK, PsbL, PsbM, PsbT, PsbX, PsbY, PsbZ, Psb30/Ycf12, peripheral proteins PsbO, CyanoQ (PsbQ), PsbU, PsbV and a large number of cofactors. It forms dimeric complexes.

It localises to the cellular thylakoid membrane. Functionally, one of the components of the core complex of photosystem II (PSII). PSII is a light-driven water:plastoquinone oxidoreductase that uses light energy to abstract electrons from H(2)O, generating O(2) and a proton gradient subsequently used for ATP formation. It consists of a core antenna complex that captures photons, and an electron transfer chain that converts photonic excitation into a charge separation. This chain is Photosystem II reaction center protein K, found in Crocosphaera subtropica (strain ATCC 51142 / BH68) (Cyanothece sp. (strain ATCC 51142)).